Reading from the N-terminus, the 237-residue chain is tRNA1(Val) (adenine(37)-N6)-methyltransferase (237 aa).

Belongs to the methyltransferase superfamily. tRNA (adenine-N(6)-)-methyltransferase family.

It localises to the cytoplasm. The enzyme catalyses adenosine(37) in tRNA1(Val) + S-adenosyl-L-methionine = N(6)-methyladenosine(37) in tRNA1(Val) + S-adenosyl-L-homocysteine + H(+). In terms of biological role, specifically methylates the adenine in position 37 of tRNA(1)(Val) (anticodon cmo5UAC). The sequence is that of tRNA1(Val) (adenine(37)-N6)-methyltransferase from Pasteurella multocida (strain Pm70).